A 350-amino-acid polypeptide reads, in one-letter code: Biotin synthase (350 aa).

A Radical SAM core domain is found at 54 to 278 (REIQLSTLLS…TMPQSYVRLS (225 aa)). Residues cysteine 69, cysteine 73, and cysteine 76 each coordinate [4Fe-4S] cluster. The [2Fe-2S] cluster site is built by cysteine 113, cysteine 144, cysteine 204, and arginine 276.

The protein belongs to the radical SAM superfamily. Biotin synthase family. As to quaternary structure, homodimer. [4Fe-4S] cluster is required as a cofactor. [2Fe-2S] cluster serves as cofactor.

The enzyme catalyses (4R,5S)-dethiobiotin + (sulfur carrier)-SH + 2 reduced [2Fe-2S]-[ferredoxin] + 2 S-adenosyl-L-methionine = (sulfur carrier)-H + biotin + 2 5'-deoxyadenosine + 2 L-methionine + 2 oxidized [2Fe-2S]-[ferredoxin]. It functions in the pathway cofactor biosynthesis; biotin biosynthesis; biotin from 7,8-diaminononanoate: step 2/2. Functionally, catalyzes the conversion of dethiobiotin (DTB) to biotin by the insertion of a sulfur atom into dethiobiotin via a radical-based mechanism. The chain is Biotin synthase from Neisseria meningitidis serogroup C / serotype 2a (strain ATCC 700532 / DSM 15464 / FAM18).